Reading from the N-terminus, the 266-residue chain is UPF0354 protein LMHCC_0955 (266 aa).

This sequence belongs to the UPF0354 family.

The sequence is that of UPF0354 protein LMHCC_0955 from Listeria monocytogenes serotype 4a (strain HCC23).